The sequence spans 739 residues: MEHTYQYAWVIPLLPLPVIMSMGFGLILIPTATKNLRRIWAFPSVLLLSIAMVFSVQLSIQQINGSSIYQYLWSWTVNNDFSLEFGYLIDPLTSIMLILITTVGILVLIYSDGYMSHDEGYLRFFVYISFFNTSMLGLVTSSNLIQIYFFWELVGMCSYLLIGFWFTRPIAASACQKAFVTNRVGDFGLLLGILGFFWITGSLEFRDLFQIANNWIPNNGINSLLTTLCAFLLFLGAVAKSAQFPLHVWLPDAMEGPTPISALIHAATMVAAGIFLLARLLPLFISLPLIMSFISLVGTITLFLGATLALAQRDIKRSLAYSTMSQLGYMMLALGIGSYQAALFHLITHAYSKALLFLGSGSVIHSMEPLVGYSPDKSQNMVLMGGLRKYIPITRTTFLWGTLSLCGIPPLACFWSKDEILSNSWLYSPFFGIIASFTAGLTAFYMFRIYLLTFGGYLRVHFQNYSSTKESSLYSISLWGKRIPKGVNRDFVLSTTKSGVSFFSQNIPKIQGNTRNRIGSFTTSFGAKNTFAYPHETGNTMLFPLLILLLFTLFIGFIGISFDNGGMDNGIAELTILSKWLTPSKNFTQESSNSFVNSYEFITNAISSVTLAIFGLFIAYIFYGSAYSFFQNLDLINSFVKRNPKKEFLDQVKKNIYSWSYNRGYIDIFYTRVFTLGIRGLTELTEFFDKGVIDGITNGVGLASFCIGEEIKYVGGGRISSYLFFFLCYVSVFLFFFLS.

Transmembrane regions (helical) follow at residues W9–I29, I39–S59, I89–I109, F125–I145, I147–T167, G185–F205, N219–A239, T258–A278, L280–I300, L327–I347, A354–S374, T396–S416, W425–Y445, L542–F562, T610–F630, and I719–S739.

It belongs to the complex I subunit 5 family. As to quaternary structure, NDH is composed of at least 16 different subunits, 5 of which are encoded in the nucleus.

It is found in the plastid. The protein localises to the chloroplast thylakoid membrane. It catalyses the reaction a plastoquinone + NADH + (n+1) H(+)(in) = a plastoquinol + NAD(+) + n H(+)(out). It carries out the reaction a plastoquinone + NADPH + (n+1) H(+)(in) = a plastoquinol + NADP(+) + n H(+)(out). NDH shuttles electrons from NAD(P)H:plastoquinone, via FMN and iron-sulfur (Fe-S) centers, to quinones in the photosynthetic chain and possibly in a chloroplast respiratory chain. The immediate electron acceptor for the enzyme in this species is believed to be plastoquinone. Couples the redox reaction to proton translocation, and thus conserves the redox energy in a proton gradient. The polypeptide is NAD(P)H-quinone oxidoreductase subunit 5, chloroplastic (ndhF) (Hordeum vulgare (Barley)).